Here is a 522-residue protein sequence, read N- to C-terminus: N-acetylgalactosamine-6-sulfatase (522 aa).

A signal peptide spans 1 to 25 (MAAVAAATRWHLLLVLSAAGLGVTG). Residues 27 to 379 (PQPPNILLLL…PAMLQGRLTE (353 aa)) form a catalytic domain region. Residues Asp-38, Asp-39, and Cys-78 each contribute to the Ca(2+) site. Cys-78 acts as the Nucleophile in catalysis. The residue at position 78 (Cys-78) is a 3-oxoalanine (Cys). His-141 is a catalytic residue. A glycan (N-linked (GlcNAc...) asparagine) is linked at Asn-203. Residues Asp-288 and Asn-289 each contribute to the Ca(2+) site. Cys-308 and Cys-419 are disulfide-bonded. N-linked (GlcNAc...) asparagine glycosylation is present at Asn-423. 2 disulfide bridges follow: Cys-489-Cys-518 and Cys-501-Cys-507.

This sequence belongs to the sulfatase family. Homodimer. Ca(2+) is required as a cofactor. Post-translationally, the conversion to 3-oxoalanine (also known as C-formylglycine, FGly), of a serine or cysteine residue in prokaryotes and of a cysteine residue in eukaryotes, is critical for catalytic activity.

It localises to the lysosome. It carries out the reaction Hydrolysis of the 6-sulfate groups of the N-acetyl-D-galactosamine 6-sulfate units of chondroitin sulfate and of the D-galactose 6-sulfate units of keratan sulfate.. This chain is N-acetylgalactosamine-6-sulfatase (GALNS), found in Sus scrofa (Pig).